The primary structure comprises 683 residues: MAKKKGEEQDFEEEPNFDDPEGFVDDVSDEELLGDFLRQKPCESDGVENVIVVDNIPVVGAARFPKLKGIIEKIFKNAGTIVNVHYPKDEEDNTKGYAFVEYKNQESAEEAVKSLNNYRLDKHYTLLVNRFADFQKYSDIPKEWSPPQPQPYKVQNDLYNFLLEADAQDQFCVVSETVPGSVQVQFCQNTQPEPTELLKRERFTDTYVKWSPKGTYIVTFHKQGVVVWGGSSFVKVNKFAHSNAQFVDISPCEQYLVTYGPNGQKIVIWDIRTGAEKRTFVSDGMSNASMLRWSHDDRYVARLVDSQIQIYDTTTFFLLDMKSIRVEGIRNFSWSPTDNIIAYWVAEEVDVPAKVTLMAIPKKTELRTKNLFNVADCKIHWQKSGDYLCVKVDRFSKSKKEKKDKKDSDVKFLGMFYNFEIFHMREKDIPVDSVEVKETILAFAWEPVGSKFSIIHGEPSSANVSFYETNKGQEPVLVKKLEKKVCGHLFWSPRGQFIVLANLQMGTFEFVDTNDFSIMKTGDHYRASEVEWDPTGRYVVTGTSGKAKEDQGYYMWSFQGRILKRVNLKNFMLFLWRPRPPTLLSDAKQKEILKNLKKYYSQFESKDRLRMTRASKELIEKRAKLREQFTEYRSKRVKEWEDQKKRRMQLRNNVDTDTLEADPDNVEEEIVEILVREDTTVIE.

Residues 1-25 form a disordered region; that stretch reads MAKKKGEEQDFEEEPNFDDPEGFVD. The segment covering 9–25 has biased composition (acidic residues); the sequence is QDFEEEPNFDDPEGFVD. Positions 49–133 constitute an RRM domain; that stretch reads NVIVVDNIPV…YTLLVNRFAD (85 aa). 6 WD repeats span residues 199-238, 240-279, 283-321, 324-359, 435-477, and 522-567; these read KRERFTDTYVKWSPKGTYIVTFHKQGVVVWGGSSFVKVNK, AHSNAQFVDISPCEQYLVTYGPNGQKIVIWDIRTGAEKRT, DGMSNASMLRWSHDDRYVARLVDSQIQIYDTTTFFLLDM, IRVEGIRNFSWSPTDNIIAYWVAEEVDVPAKVTLMA, EVKE…EPVL, and GDHY…KRVN. Positions 611–638 form a coiled coil; the sequence is MTRASKELIEKRAKLREQFTEYRSKRVK.

It belongs to the eIF-3 subunit B family. Component of the eukaryotic translation initiation factor 3 (eIF-3) complex.

The protein resides in the cytoplasm. Its function is as follows. RNA-binding component of the eukaryotic translation initiation factor 3 (eIF-3) complex, which is involved in protein synthesis of a specialized repertoire of mRNAs and, together with other initiation factors, stimulates binding of mRNA and methionyl-tRNAi to the 40S ribosome. The eIF-3 complex specifically targets and initiates translation of a subset of mRNAs involved in cell proliferation. The polypeptide is Eukaryotic translation initiation factor 3 subunit B (Anopheles gambiae (African malaria mosquito)).